Reading from the N-terminus, the 328-residue chain is L-lactate dehydrogenase (328 aa).

NAD(+)-binding positions include Val-18, Glu-39, Lys-46, Tyr-71, and 85-86 (GA). Substrate contacts are provided by Gln-88 and Arg-94. Residues Ser-107, 124 to 126 (AAN), and Ser-149 contribute to the NAD(+) site. 126-129 (NPVD) is a binding site for substrate. 154–157 (DSAR) contributes to the substrate binding site. Positions 159 and 174 each coordinate beta-D-fructose 1,6-bisphosphate. His-181 functions as the Proton acceptor in the catalytic mechanism. Residue Tyr-226 is modified to Phosphotyrosine. Thr-235 lines the substrate pocket.

The protein belongs to the LDH/MDH superfamily. LDH family. In terms of assembly, homotetramer.

It is found in the cytoplasm. The catalysed reaction is (S)-lactate + NAD(+) = pyruvate + NADH + H(+). It participates in fermentation; pyruvate fermentation to lactate; (S)-lactate from pyruvate: step 1/1. Allosterically activated by fructose 1,6-bisphosphate (FBP). Catalyzes the conversion of lactate to pyruvate. The polypeptide is L-lactate dehydrogenase (Streptococcus thermophilus (strain CNRZ 1066)).